The primary structure comprises 567 residues: UPF0313 protein TM_0337 (567 aa).

A Radical SAM core domain is found at 288–560 (KAIETVKFSI…NKMKENVLFK (273 aa)). The [4Fe-4S] cluster site is built by cysteine 303, cysteine 307, and cysteine 310.

This sequence belongs to the UPF0313 family. It depends on [4Fe-4S] cluster as a cofactor.

This chain is UPF0313 protein TM_0337, found in Thermotoga maritima (strain ATCC 43589 / DSM 3109 / JCM 10099 / NBRC 100826 / MSB8).